A 444-amino-acid polypeptide reads, in one-letter code: Trigger factor (444 aa).

One can recognise a PPIase FKBP-type domain in the interval 166 to 251 (GDQVVIDFKG…VKAVKAPKAA (86 aa)).

Belongs to the FKBP-type PPIase family. Tig subfamily.

The protein resides in the cytoplasm. The catalysed reaction is [protein]-peptidylproline (omega=180) = [protein]-peptidylproline (omega=0). In terms of biological role, involved in protein export. Acts as a chaperone by maintaining the newly synthesized protein in an open conformation. Functions as a peptidyl-prolyl cis-trans isomerase. In Cereibacter sphaeroides (strain KD131 / KCTC 12085) (Rhodobacter sphaeroides), this protein is Trigger factor.